Reading from the N-terminus, the 140-residue chain is Nucleoside diphosphate kinase (140 aa).

Residues K11, F59, R87, T93, R104, and N114 each contribute to the ATP site. Catalysis depends on H117, which acts as the Pros-phosphohistidine intermediate.

It belongs to the NDK family. Homotetramer. The cofactor is Mg(2+).

Its subcellular location is the cytoplasm. The catalysed reaction is a 2'-deoxyribonucleoside 5'-diphosphate + ATP = a 2'-deoxyribonucleoside 5'-triphosphate + ADP. It carries out the reaction a ribonucleoside 5'-diphosphate + ATP = a ribonucleoside 5'-triphosphate + ADP. Its function is as follows. Major role in the synthesis of nucleoside triphosphates other than ATP. The ATP gamma phosphate is transferred to the NDP beta phosphate via a ping-pong mechanism, using a phosphorylated active-site intermediate. This chain is Nucleoside diphosphate kinase, found in Agrobacterium fabrum (strain C58 / ATCC 33970) (Agrobacterium tumefaciens (strain C58)).